A 122-amino-acid chain; its full sequence is MIQSFTRLNVADNSGAKEIMCIKVLGGSHKRYASVGSVIVASVKKAIPNGKVKRGQVVKAVVVRTKKEIQRKNGSLVRFDDNAAVILDAKKDPVGTRIFGPVSREVRYANFMKIISLAPEVV.

This sequence belongs to the universal ribosomal protein uL14 family. As to quaternary structure, part of the 50S ribosomal subunit. Forms a cluster with proteins L3 and L19. In the 70S ribosome, L14 and L19 interact and together make contacts with the 16S rRNA in bridges B5 and B8.

In terms of biological role, binds to 23S rRNA. Forms part of two intersubunit bridges in the 70S ribosome. The sequence is that of Large ribosomal subunit protein uL14 from Helicobacter acinonychis (strain Sheeba).